The chain runs to 100 residues: NADH-quinone oxidoreductase subunit K (100 aa).

3 consecutive transmembrane segments (helical) span residues 4–24 (TTWV…GLLS), 28–48 (LLFI…LFIA), and 60–80 (IMYL…LALV).

Belongs to the complex I subunit 4L family. NDH-1 is composed of 13 different subunits. Subunits NuoA, H, J, K, L, M, N constitute the membrane sector of the complex.

It localises to the cell inner membrane. It catalyses the reaction a quinone + NADH + 5 H(+)(in) = a quinol + NAD(+) + 4 H(+)(out). NDH-1 shuttles electrons from NADH, via FMN and iron-sulfur (Fe-S) centers, to quinones in the respiratory chain. The immediate electron acceptor for the enzyme in this species is believed to be ubiquinone. Couples the redox reaction to proton translocation (for every two electrons transferred, four hydrogen ions are translocated across the cytoplasmic membrane), and thus conserves the redox energy in a proton gradient. The chain is NADH-quinone oxidoreductase subunit K from Shewanella woodyi (strain ATCC 51908 / MS32).